A 116-amino-acid chain; its full sequence is U30-theraphotoxin-Cg1b (116 aa).

Residues M1–S17 form the signal peptide. Positions L18–R53 are excised as a propeptide. The disordered stretch occupies residues A25 to E45. Disulfide bonds link C55/C69, C62/C75, C66/C112, and C68/C88.

It belongs to the neurotoxin 03 (Tx2) family. 02 subfamily. As to expression, expressed by the venom gland.

The protein resides in the secreted. Its function is as follows. Probable ion channel inhibitor. This is U30-theraphotoxin-Cg1b from Chilobrachys guangxiensis (Chinese earth tiger tarantula).